The primary structure comprises 635 residues: Threonine--tRNA ligase (635 aa).

A TGS domain is found at 1-61 (MVSIRLPDGS…DRDASLAIVT (61 aa)). Positions 242–533 (DHRKLGKQLD…LIEHHAGAMP (292 aa)) are catalytic. Zn(2+) is bound by residues Cys-333, His-384, and His-510.

The protein belongs to the class-II aminoacyl-tRNA synthetase family. Homodimer. Zn(2+) serves as cofactor.

It localises to the cytoplasm. It catalyses the reaction tRNA(Thr) + L-threonine + ATP = L-threonyl-tRNA(Thr) + AMP + diphosphate + H(+). Its function is as follows. Catalyzes the attachment of threonine to tRNA(Thr) in a two-step reaction: L-threonine is first activated by ATP to form Thr-AMP and then transferred to the acceptor end of tRNA(Thr). Also edits incorrectly charged L-seryl-tRNA(Thr). The chain is Threonine--tRNA ligase from Burkholderia pseudomallei (strain 1106a).